We begin with the raw amino-acid sequence, 223 residues long: Urease accessory protein UreF (223 aa).

The protein belongs to the UreF family. In terms of assembly, ureD, UreF and UreG form a complex that acts as a GTP-hydrolysis-dependent molecular chaperone, activating the urease apoprotein by helping to assemble the nickel containing metallocenter of UreC. The UreE protein probably delivers the nickel.

The protein resides in the cytoplasm. Its function is as follows. Required for maturation of urease via the functional incorporation of the urease nickel metallocenter. In Rhizobium etli (strain ATCC 51251 / DSM 11541 / JCM 21823 / NBRC 15573 / CFN 42), this protein is Urease accessory protein UreF.